The sequence spans 440 residues: tRNA(Ile)-lysidine synthase (440 aa).

31 to 36 (SGGADS) contacts ATP.

It belongs to the tRNA(Ile)-lysidine synthase family.

The protein resides in the cytoplasm. The enzyme catalyses cytidine(34) in tRNA(Ile2) + L-lysine + ATP = lysidine(34) in tRNA(Ile2) + AMP + diphosphate + H(+). In terms of biological role, ligates lysine onto the cytidine present at position 34 of the AUA codon-specific tRNA(Ile) that contains the anticodon CAU, in an ATP-dependent manner. Cytidine is converted to lysidine, thus changing the amino acid specificity of the tRNA from methionine to isoleucine. This Borreliella burgdorferi (strain ATCC 35210 / DSM 4680 / CIP 102532 / B31) (Borrelia burgdorferi) protein is tRNA(Ile)-lysidine synthase.